Consider the following 288-residue polypeptide: ATP phosphoribosyltransferase (288 aa).

It belongs to the ATP phosphoribosyltransferase family. Long subfamily. Mg(2+) is required as a cofactor.

It localises to the cytoplasm. It carries out the reaction 1-(5-phospho-beta-D-ribosyl)-ATP + diphosphate = 5-phospho-alpha-D-ribose 1-diphosphate + ATP. The protein operates within amino-acid biosynthesis; L-histidine biosynthesis; L-histidine from 5-phospho-alpha-D-ribose 1-diphosphate: step 1/9. Feedback inhibited by histidine. Functionally, catalyzes the condensation of ATP and 5-phosphoribose 1-diphosphate to form N'-(5'-phosphoribosyl)-ATP (PR-ATP). Has a crucial role in the pathway because the rate of histidine biosynthesis seems to be controlled primarily by regulation of HisG enzymatic activity. This chain is ATP phosphoribosyltransferase, found in Methanococcus maripaludis (strain C5 / ATCC BAA-1333).